Reading from the N-terminus, the 307-residue chain is 2-methoxy-6-polyprenyl-1,4-benzoquinol methylase, mitochondrial (307 aa).

The transit peptide at 1–19 (MLISSRIVRSSLVNVPLRL) directs the protein to the mitochondrion. S-adenosyl-L-methionine contacts are provided by residues serine 122, aspartate 148, 179–180 (NG), and serine 197.

Belongs to the class I-like SAM-binding methyltransferase superfamily. MenG/UbiE family. Component of a multi-subunit COQ enzyme complex, composed of at least COQ3, COQ4, COQ5, COQ6, COQ7 and COQ9. Interacts with COQ3.

The protein localises to the mitochondrion inner membrane. The enzyme catalyses 2-methoxy-6-(all-trans-hexaprenyl)benzene-1,4-diol + S-adenosyl-L-methionine = 5-methoxy-2-methyl-3-(all-trans-hexaprenyl)benzene-1,4-diol + S-adenosyl-L-homocysteine + H(+). It participates in cofactor biosynthesis; ubiquinone biosynthesis. Functionally, methyltransferase required for the conversion of 2-hexaprenyl-6-methoxy-1,4-benzoquinol (DDMQH2) to 2-hexaprenyl-3-methyl-6-methoxy-1,4-benzoquinol (DMQH2). In Saccharomyces cerevisiae (strain ATCC 204508 / S288c) (Baker's yeast), this protein is 2-methoxy-6-polyprenyl-1,4-benzoquinol methylase, mitochondrial.